The following is a 453-amino-acid chain: Wall-associated protein (453 aa).

The signal sequence occupies residues 1 to 29 (MKMKRKLLSLVSVLTILLGAFWVTKIVKA). The disordered stretch occupies residues 331–403 (GRASSRVKRQ…TASQTNVPTT (73 aa)). A compositionally biased stretch (low complexity) spans 342 to 403 (ETTTVTETTT…TASQTNVPTT (62 aa)). The LPXTG sorting signal signature appears at 422-426 (LPSTG). Thr425 is modified (pentaglycyl murein peptidoglycan amidated threonine). Positions 426–453 (GEQAGLLLTTVGLVIVAVAGVYFYRTRR) are cleaved as a propeptide — removed by sortase.

It localises to the secreted. The protein localises to the cell wall. The sequence is that of Wall-associated protein (wapA) from Streptococcus mutans serotype c (strain ATCC 700610 / UA159).